We begin with the raw amino-acid sequence, 164 residues long: Protein-export protein SecB (164 aa).

The segment covering 1–12 (MPDKDEITHDAQ) has biased composition (basic and acidic residues). Positions 1–22 (MPDKDEITHDAQSENEESLPLA) are disordered.

The protein belongs to the SecB family. In terms of assembly, homotetramer, a dimer of dimers. One homotetramer interacts with 1 SecA dimer.

It is found in the cytoplasm. One of the proteins required for the normal export of preproteins out of the cell cytoplasm. It is a molecular chaperone that binds to a subset of precursor proteins, maintaining them in a translocation-competent state. It also specifically binds to its receptor SecA. The sequence is that of Protein-export protein SecB from Neorickettsia sennetsu (strain ATCC VR-367 / Miyayama) (Ehrlichia sennetsu).